We begin with the raw amino-acid sequence, 556 residues long: 2-isopropylmalate synthase (556 aa).

One can recognise a Pyruvate carboxyltransferase domain in the interval 33–307 (PIWCSSDLRD…NPELDFSDID (275 aa)). 4 residues coordinate Mg(2+): D42, H246, H248, and N282. The tract at residues 439-556 (ANTPYALISH…SLSQAQAKAA (118 aa)) is regulatory domain.

This sequence belongs to the alpha-IPM synthase/homocitrate synthase family. LeuA type 2 subfamily. In terms of assembly, homodimer. It depends on Mg(2+) as a cofactor.

The protein localises to the cytoplasm. It carries out the reaction 3-methyl-2-oxobutanoate + acetyl-CoA + H2O = (2S)-2-isopropylmalate + CoA + H(+). It participates in amino-acid biosynthesis; L-leucine biosynthesis; L-leucine from 3-methyl-2-oxobutanoate: step 1/4. In terms of biological role, catalyzes the condensation of the acetyl group of acetyl-CoA with 3-methyl-2-oxobutanoate (2-ketoisovalerate) to form 3-carboxy-3-hydroxy-4-methylpentanoate (2-isopropylmalate). The chain is 2-isopropylmalate synthase from Pseudomonas syringae pv. tomato (strain ATCC BAA-871 / DC3000).